A 338-amino-acid chain; its full sequence is Phytanoyl-CoA dioxygenase, peroxisomal (338 aa).

A peroxisome-targeting transit peptide spans 1-30 (MDYTRAGARLQVLLGHLGRPSALQIVAHPV). 2 positions are modified to N6-succinyllysine: Lys59 and Lys108. Residues Lys120, Met157, 175 to 177 (HQD), and Trp193 contribute to the 2-oxoglutarate site. 2 residues coordinate Fe cation: His175 and Asp177. Lys231 and Lys252 each carry N6-succinyllysine. Position 264 (His264) interacts with Fe cation. Residues Ser266 and Arg275 each contribute to the 2-oxoglutarate site.

Belongs to the PhyH family. As to quaternary structure, interacts specifically with FKBP52 and PHYHIP. Fe cation is required as a cofactor. Requires L-ascorbate as cofactor. ATP serves as cofactor. It depends on Mg(2+) as a cofactor.

Its subcellular location is the peroxisome. The catalysed reaction is phytanoyl-CoA + 2-oxoglutarate + O2 = 2-hydroxyphytanoyl-CoA + succinate + CO2. It carries out the reaction 3-methylhexadecanoyl-CoA + 2-oxoglutarate + O2 = 2-hydroxy-3-methylhexadecanoyl-CoA + succinate + CO2. The enzyme catalyses hexadecanoyl-CoA + 2-oxoglutarate + O2 = 2-hydroxyhexadecanoyl-CoA + succinate + CO2. It catalyses the reaction octanoyl-CoA + 2-oxoglutarate + O2 = 2-hydroxyoctanoyl-CoA + succinate + CO2. The catalysed reaction is decanoyl-CoA + 2-oxoglutarate + O2 = 2-hydroxydecanoyl-CoA + succinate + CO2. It carries out the reaction 3-methylbutanoyl-CoA + 2-oxoglutarate + O2 = 2-hydroxy-3-methylbutanoyl-CoA + succinate + CO2. The enzyme catalyses heptadecanoyl-CoA + 2-oxoglutarate + O2 = 2-hydroxyheptadecanoyl-CoA + succinate + CO2. It catalyses the reaction eicosanoyl-CoA + 2-oxoglutarate + O2 = 2-hydroxyeicosanoyl-CoA + succinate + CO2. The catalysed reaction is octadecanoyl-CoA + 2-oxoglutarate + O2 = 2-hydroxyoctadecanoyl-CoA + succinate + CO2. It carries out the reaction dodecanoyl-CoA + 2-oxoglutarate + O2 = 2-hydroxydodecanoyl-CoA + succinate + CO2. The enzyme catalyses tetradecanoyl-CoA + 2-oxoglutarate + O2 = 2-hydroxytetradecanoyl-CoA + succinate + CO2. It catalyses the reaction hexanoyl-CoA + 2-oxoglutarate + O2 = 2-hydroxyhexanoyl-CoA + succinate + CO2. The catalysed reaction is butanoyl-CoA + 2-oxoglutarate + O2 = 2-hydroxybutanoyl-CoA + succinate + CO2. It carries out the reaction 3-methylnonanoyl-CoA + 2-oxoglutarate + O2 = 2-hydroxy-3-methylnonanoyl-CoA + succinate + CO2. The enzyme catalyses 3-methylundecanoyl-CoA + 2-oxoglutarate + O2 = 2-hydroxy-3-methylundecanoyl-CoA + succinate + CO2. It catalyses the reaction 3-methyldodecanoyl-CoA + 2-oxoglutarate + O2 = 2-hydroxy-3-methyldodecanoyl-CoA + succinate + CO2. The protein operates within lipid metabolism; fatty acid metabolism. In terms of biological role, catalyzes the 2-hydroxylation of racemic phytanoyl-CoA and the isomers of 3-methylhexadecanoyl-CoA. Shows activity also towards a variety of other mono-branched 3-methylacyl-CoA esters (with a chain length of at least seven carbon atoms) and straight-chain acyl-CoA esters (with a chain length longer than four carbon atoms). Does not hydroxylate long and very long straight chain acyl-CoAs or 2-methyl-and 4-methyl-branched acyl-CoAs. This is Phytanoyl-CoA dioxygenase, peroxisomal (Phyh) from Rattus norvegicus (Rat).